Consider the following 360-residue polypeptide: Endolytic murein transglycosylase (360 aa).

Residues 16 to 36 (IILSSIVVLFLIIGGAFLYGK) form a helical membrane-spanning segment.

The protein belongs to the transglycosylase MltG family.

The protein localises to the cell membrane. The enzyme catalyses a peptidoglycan chain = a peptidoglycan chain with N-acetyl-1,6-anhydromuramyl-[peptide] at the reducing end + a peptidoglycan chain with N-acetylglucosamine at the non-reducing end.. In terms of biological role, functions as a peptidoglycan terminase that cleaves nascent peptidoglycan strands endolytically to terminate their elongation. The chain is Endolytic murein transglycosylase from Bacillus subtilis (strain 168).